A 365-amino-acid chain; its full sequence is Peptide chain release factor 2 (365 aa).

Position 252 is an N5-methylglutamine (Gln252).

This sequence belongs to the prokaryotic/mitochondrial release factor family. In terms of processing, methylated by PrmC. Methylation increases the termination efficiency of RF2.

It is found in the cytoplasm. Functionally, peptide chain release factor 2 directs the termination of translation in response to the peptide chain termination codons UGA and UAA. This is Peptide chain release factor 2 from Yersinia enterocolitica serotype O:8 / biotype 1B (strain NCTC 13174 / 8081).